Consider the following 67-residue polypeptide: Large ribosomal subunit protein bL31 (67 aa).

4 residues coordinate Zn(2+): C16, C18, C36, and C39.

Belongs to the bacterial ribosomal protein bL31 family. Type A subfamily. As to quaternary structure, part of the 50S ribosomal subunit. Zn(2+) is required as a cofactor.

Functionally, binds the 23S rRNA. The sequence is that of Large ribosomal subunit protein bL31 from Aliarcobacter butzleri (strain RM4018) (Arcobacter butzleri).